The chain runs to 858 residues: NEDD4-binding protein 1 (858 aa).

A disordered region spans residues 17 to 37; sequence TCTEPPGGRQSPTASRAQPDS. The segment covering 26-37 has biased composition (polar residues); it reads QSPTASRAQPDS. In terms of domain architecture, KH-like spans 96–180; it reads KEDVYKAKEY…VQQFVALFQE (85 aa). Disordered stretches follow at residues 262–321 and 388–424; these read EDKT…TWTV and QKTQ…KEKE. Residues 285–316 show a composition bias toward basic and acidic residues; sequence RSSESEQRDTKRQYSLERREEEQCEEREREPT. Residues 389 to 418 are compositionally biased toward polar residues; the sequence is KTQSTQGAQRTSRTPDPSPCANASSTSTSN. Residues 598-750 form the RNase NYN domain; the sequence is LRHIIIDGSN…LGKHGPHLDE (153 aa). The segment covering 774–784 has biased composition (polar residues); sequence SVYSQAAQSTA. The segment at 774-823 is disordered; the sequence is SVYSQAAQSTAHPSSPSHWPHSGPPDWHLPRPSPSPPPQRSPSETTELKR. Residues 785-799 are compositionally biased toward low complexity; the sequence is HPSSPSHWPHSGPPD. Pro residues predominate over residues 804–813; the sequence is RPSPSPPPQR. A coCUN region spans residues 813–858; sequence RSPSETTELKRKLYDIFPDQKQRIDRILSDNPYMRDLNALSGLLLG.

Belongs to the N4BP1 family.

It is found in the nucleus. Its subcellular location is the nucleolus. It localises to the PML body. Potent suppressor of cytokine production that acts as a regulator of innate immune signaling and inflammation. Acts as a key negative regulator of select cytokine and chemokine responses elicited by TRIF-independent Toll-like receptors (TLRs), thereby limiting inflammatory cytokine responses to minor insults. Has ribonuclease activity. The polypeptide is NEDD4-binding protein 1 (Danio rerio (Zebrafish)).